Consider the following 211-residue polypeptide: MAECVVHDWQGKEAGKASLELKVSKETTAVDLMHRAVLRQQAHSRQGTASTLTRAEVRGGGRKPYKQKGTGRARQGTIRTPLRPGGGIIFGPKPRTYNLAMNRKERRLALRTALMARLEDVIVVKDFGDSLKAPKTREISDALVRLGVAADAKVLIILSTPSEIIRRSVRNLEKVKLIAADQLNVFDLLHANSLVLSEEALAKIQEVYGDD.

Residues 41–53 are compositionally biased toward polar residues; sequence QAHSRQGTASTLT. Residues 41–78 form a disordered region; sequence QAHSRQGTASTLTRAEVRGGGRKPYKQKGTGRARQGTI. Over residues 60-71 the composition is skewed to basic residues; that stretch reads GGRKPYKQKGTG.

Belongs to the universal ribosomal protein uL4 family. As to quaternary structure, part of the 50S ribosomal subunit.

Functionally, one of the primary rRNA binding proteins, this protein initially binds near the 5'-end of the 23S rRNA. It is important during the early stages of 50S assembly. It makes multiple contacts with different domains of the 23S rRNA in the assembled 50S subunit and ribosome. In terms of biological role, forms part of the polypeptide exit tunnel. The polypeptide is Large ribosomal subunit protein uL4 (Prochlorococcus marinus (strain MIT 9303)).